Consider the following 430-residue polypeptide: Adenylosuccinate synthetase (430 aa).

Residues 12–18 (GDEGKGK) and 40–42 (GHT) each bind GTP. The Proton acceptor role is filled by Asp-13. Positions 13 and 40 each coordinate Mg(2+). IMP contacts are provided by residues 13–16 (DEGK), 38–41 (NAGH), Thr-130, Arg-144, Gln-224, Thr-239, and Arg-303. His-41 functions as the Proton donor in the catalytic mechanism. 299 to 305 (VNTGRKR) is a substrate binding site. GTP is bound by residues Arg-305, 331 to 333 (KLD), and 413 to 415 (STS).

The protein belongs to the adenylosuccinate synthetase family. As to quaternary structure, homodimer. It depends on Mg(2+) as a cofactor.

It is found in the cytoplasm. It carries out the reaction IMP + L-aspartate + GTP = N(6)-(1,2-dicarboxyethyl)-AMP + GDP + phosphate + 2 H(+). The protein operates within purine metabolism; AMP biosynthesis via de novo pathway; AMP from IMP: step 1/2. Functionally, plays an important role in the de novo pathway of purine nucleotide biosynthesis. Catalyzes the first committed step in the biosynthesis of AMP from IMP. The protein is Adenylosuccinate synthetase of Rhodopseudomonas palustris (strain BisB18).